Reading from the N-terminus, the 122-residue chain is Large ribosomal subunit protein uL14 (122 aa).

It belongs to the universal ribosomal protein uL14 family. Part of the 50S ribosomal subunit. Forms a cluster with proteins L3 and L19. In the 70S ribosome, L14 and L19 interact and together make contacts with the 16S rRNA in bridges B5 and B8.

Binds to 23S rRNA. Forms part of two intersubunit bridges in the 70S ribosome. The polypeptide is Large ribosomal subunit protein uL14 (Rhodococcus jostii (strain RHA1)).